The chain runs to 285 residues: Type II restriction enzyme Cfr10I (285 aa).

The Mg(2+) site is built by Asp134 and Glu204.

In terms of assembly, homodimer. Requires Mg(2+) as cofactor.

It catalyses the reaction Endonucleolytic cleavage of DNA to give specific double-stranded fragments with terminal 5'-phosphates.. In terms of biological role, an F and P subtype restriction enzyme that recognizes the double-stranded sequence 5'-RCCGGY-3' and cleaves after R-1. The chain is Type II restriction enzyme Cfr10I (cfr10IR) from Citrobacter freundii.